A 151-amino-acid polypeptide reads, in one-letter code: Deoxyuridine 5'-triphosphate nucleotidohydrolase (151 aa).

Substrate-binding positions include 70–72 (RSG), asparagine 83, 87–89 (LID), and methionine 97.

It belongs to the dUTPase family. In terms of assembly, homotrimer. Requires Mg(2+) as cofactor.

The enzyme catalyses dUTP + H2O = dUMP + diphosphate + H(+). The protein operates within pyrimidine metabolism; dUMP biosynthesis; dUMP from dCTP (dUTP route): step 2/2. In terms of biological role, this enzyme is involved in nucleotide metabolism: it produces dUMP, the immediate precursor of thymidine nucleotides and it decreases the intracellular concentration of dUTP so that uracil cannot be incorporated into DNA. The polypeptide is Deoxyuridine 5'-triphosphate nucleotidohydrolase (Escherichia coli (strain K12 / MC4100 / BW2952)).